We begin with the raw amino-acid sequence, 506 residues long: BTB/POZ domain-containing protein 16 (506 aa).

In terms of domain architecture, BTB spans 150-206; it reads INDPAVTRVAFALALKNLYMNEVEMTVDNVLGVLASAHILQFNRLFRKCVSTMLNRL.

This Rattus norvegicus (Rat) protein is BTB/POZ domain-containing protein 16 (Btbd16).